Here is a 182-residue protein sequence, read N- to C-terminus: ATP synthase subunit delta, mitochondrial (182 aa).

A mitochondrion-targeting transit peptide spans 1 to 17 (MFRTFGRRLVSCTLPLL).

It belongs to the ATPase epsilon chain family. F-type ATPases have 2 components, F(1) - the catalytic core - and F(o) - the membrane proton channel. F(1) has five subunits: alpha(3), beta(3), gamma(1), delta(1), epsilon(1), plus the additional subunit P18 (Tb427.05.1710) that is not present in F(1)F(o) ATP synthase from metazoa. Subunit P18 (Tb927.5.1710) interacts with the alpha subunit with a 1:1 stoichiometry; the interaction is direct. Subunit gamma is part of the central stalk. F(o) has three main subunits: a, b and c. The trypanosomal ATPase complex contains additional subunits that are not present in the F(1)F(o) ATP synthase from metazoa.

It is found in the mitochondrion. Its subcellular location is the mitochondrion inner membrane. Its function is as follows. Mitochondrial membrane ATP synthase (F(1)F(o) ATP synthase) produces ATP from ADP in the presence of a proton gradient across the membrane which is generated by electron transport complexes of the respiratory chain. F-type ATPases consist of two structural domains, F(1) - containing the extramembraneous catalytic core, and F(o) - containing the membrane proton channel, linked together by a central stalk and a peripheral stalk. During catalysis, ATP synthesis in the catalytic domain of F(1) is coupled via a rotary mechanism of the central stalk subunits to proton translocation. Subunits alpha and beta form the catalytic core in F(1). Rotation of the central stalk against the surrounding alpha(3)beta(3) subunits leads to hydrolysis of ATP in three separate catalytic sites on the beta subunits. Contrary to the procyclic, insect form that requires F(1)F(o) ATP synthase for ATP synthesis, the bloodstream form relies on ATP hydrolysis by F(1)F(o) ATP synthase to maintain its mitochondrial membrane potential. In Trypanosoma brucei brucei, this protein is ATP synthase subunit delta, mitochondrial.